The following is a 401-amino-acid chain: GRIP domain-containing protein C119.12 (401 aa).

Residues 7–296 (NETKLVENEN…TLLIGKLQHE (290 aa)) adopt a coiled-coil conformation. The region spanning 315–366 (NNAEKIDKQLISNLFVSFLTLPRADTKRFEILQLISSVLDWNDTQREQTGLQ) is the GRIP domain.

It is found in the golgi apparatus lumen. The chain is GRIP domain-containing protein C119.12 from Schizosaccharomyces pombe (strain 972 / ATCC 24843) (Fission yeast).